The primary structure comprises 200 residues: Pyridoxal 5'-phosphate synthase subunit PdxT (200 aa).

Residue 46–48 (GES) participates in L-glutamine binding. Catalysis depends on Cys78, which acts as the Nucleophile. L-glutamine contacts are provided by residues Arg107 and 138 to 139 (IR). Residues His175 and Glu177 each act as charge relay system in the active site.

The protein belongs to the glutaminase PdxT/SNO family. In the presence of PdxS, forms a dodecamer of heterodimers. Only shows activity in the heterodimer.

The enzyme catalyses aldehydo-D-ribose 5-phosphate + D-glyceraldehyde 3-phosphate + L-glutamine = pyridoxal 5'-phosphate + L-glutamate + phosphate + 3 H2O + H(+). It catalyses the reaction L-glutamine + H2O = L-glutamate + NH4(+). The protein operates within cofactor biosynthesis; pyridoxal 5'-phosphate biosynthesis. Its function is as follows. Catalyzes the hydrolysis of glutamine to glutamate and ammonia as part of the biosynthesis of pyridoxal 5'-phosphate. The resulting ammonia molecule is channeled to the active site of PdxS. In Corynebacterium glutamicum (strain ATCC 13032 / DSM 20300 / JCM 1318 / BCRC 11384 / CCUG 27702 / LMG 3730 / NBRC 12168 / NCIMB 10025 / NRRL B-2784 / 534), this protein is Pyridoxal 5'-phosphate synthase subunit PdxT.